The sequence spans 290 residues: MRIADYSVTKAVLERHGFTFKKSFGQNFLTDTNILQKIVDTAEINKNVNVIEIGPGIGALTEFLAENASEVMAFEIDERLVPILEDTLRDHDNVKVINEDVLKADLQTRVKEFENPDLPIKVVANLPYYITTPILMHLIESKIPFSEFVVMMQKEVADRISAEPNTKAYGSLSIAVQYYMTAKVAFAVPRTVFVPAPNVDSAILKMTRRKQPLVEVKDEDFFFRVSKASFLHRRKTLWNNLTSHFGKSEEVKNKLDQALENAAIKPSIRGEALSISDFARLSDALREAGL.

6 residues coordinate S-adenosyl-L-methionine: Asn27, Leu29, Gly54, Glu75, Asp100, and Asn125.

The protein belongs to the class I-like SAM-binding methyltransferase superfamily. rRNA adenine N(6)-methyltransferase family. RsmA subfamily.

The protein resides in the cytoplasm. The catalysed reaction is adenosine(1518)/adenosine(1519) in 16S rRNA + 4 S-adenosyl-L-methionine = N(6)-dimethyladenosine(1518)/N(6)-dimethyladenosine(1519) in 16S rRNA + 4 S-adenosyl-L-homocysteine + 4 H(+). In terms of biological role, specifically dimethylates two adjacent adenosines (A1518 and A1519) in the loop of a conserved hairpin near the 3'-end of 16S rRNA in the 30S particle. May play a critical role in biogenesis of 30S subunits. The chain is Ribosomal RNA small subunit methyltransferase A from Streptococcus thermophilus (strain CNRZ 1066).